A 587-amino-acid chain; its full sequence is 5-aminolevulinate synthase, erythroid-specific, mitochondrial (587 aa).

The transit peptide at 1-49 directs the protein to the mitochondrion; that stretch reads MVAAAMLLRSCPVLSQGPTGLLGKVAKTYQFLFSIGRCPILATQGPTCS. Arginine 163 provides a ligand contact to succinyl-CoA. Pyridoxal 5'-phosphate-binding residues include cysteine 258 and phenylalanine 259. Residues serine 280 and lysine 299 each coordinate succinyl-CoA. Residues serine 332, histidine 360, and threonine 388 each contribute to the pyridoxal 5'-phosphate site. The active site involves lysine 391. Residue lysine 391 is modified to N6-(pyridoxal phosphate)lysine. Pyridoxal 5'-phosphate contacts are provided by threonine 420 and threonine 421. Position 508 (threonine 508) interacts with succinyl-CoA.

Belongs to the class-II pyridoxal-phosphate-dependent aminotransferase family. In terms of assembly, homodimer. Interacts with SUCLA2. It depends on pyridoxal 5'-phosphate as a cofactor. As to expression, predomnantly expressed in erythroid cells.

Its subcellular location is the mitochondrion inner membrane. The protein resides in the mitochondrion. It carries out the reaction succinyl-CoA + glycine + H(+) = 5-aminolevulinate + CO2 + CoA. It participates in porphyrin-containing compound metabolism; protoporphyrin-IX biosynthesis; 5-aminolevulinate from glycine: step 1/1. In terms of biological role, catalyzes the pyridoxal 5'-phosphate (PLP)-dependent condensation of succinyl-CoA and glycine to form aminolevulinic acid (ALA), with CoA and CO2 as by-products. Contributes significantly to heme formation during erythropoiesis. This Mus musculus (Mouse) protein is 5-aminolevulinate synthase, erythroid-specific, mitochondrial (Alas2).